A 135-amino-acid polypeptide reads, in one-letter code: Probable histone H2A.1 (135 aa).

Belongs to the histone H2A family. As to quaternary structure, the nucleosome is a histone octamer containing two molecules each of H2A, H2B, H3 and H4 assembled in one H3-H4 heterotetramer and two H2A-H2B heterodimers. The octamer wraps approximately 147 bp of DNA.

It localises to the nucleus. Its subcellular location is the chromosome. Its function is as follows. Core component of nucleosome. Nucleosomes wrap and compact DNA into chromatin, limiting DNA accessibility to the cellular machineries which require DNA as a template. Histones thereby play a central role in transcription regulation, DNA repair, DNA replication and chromosomal stability. DNA accessibility is regulated via a complex set of post-translational modifications of histones, also called histone code, and nucleosome remodeling. This Oryza sativa subsp. japonica (Rice) protein is Probable histone H2A.1.